A 458-amino-acid polypeptide reads, in one-letter code: Zinc finger protein 239 (458 aa).

A Glycyl lysine isopeptide (Lys-Gly) (interchain with G-Cter in SUMO2) cross-link involves residue Lys108. The residue at position 191 (Ser191) is a Phosphoserine. 9 consecutive C2H2-type zinc fingers follow at residues 207–229, 235–257, 263–285, 291–313, 319–341, 347–369, 375–397, 403–425, and 431–453; these read YECSQCGKNFSQSSELLLHQRDH, YKCEQCGKGFTRSSSLLIHQAVH, YKCDKCGKGFTRSSSLLIHHAVH, YKCDKCGKGFSQSSKLHIHQRVH, YECEECGMSFSQRSNLHIHQRVH, YKCGECGKGFSQSSNLHIHRCIH, YQCYECGKGFSQSSDLRIHLRVH, YHCGKCGKGFSQSSKLLIHQRVH, and YECSKCGKGFSQSSNLHIHQRVH.

The protein belongs to the krueppel C2H2-type zinc-finger protein family.

It is found in the nucleus. Functionally, may be involved in transcriptional regulation. This is Zinc finger protein 239 (ZNF239) from Homo sapiens (Human).